The primary structure comprises 241 residues: 3-deoxy-manno-octulosonate cytidylyltransferase (241 aa).

This sequence belongs to the KdsB family.

The protein resides in the cytoplasm. The catalysed reaction is 3-deoxy-alpha-D-manno-oct-2-ulosonate + CTP = CMP-3-deoxy-beta-D-manno-octulosonate + diphosphate. It functions in the pathway nucleotide-sugar biosynthesis; CMP-3-deoxy-D-manno-octulosonate biosynthesis; CMP-3-deoxy-D-manno-octulosonate from 3-deoxy-D-manno-octulosonate and CTP: step 1/1. Its pathway is bacterial outer membrane biogenesis; lipopolysaccharide biosynthesis. In terms of biological role, activates KDO (a required 8-carbon sugar) for incorporation into bacterial lipopolysaccharide in Gram-negative bacteria. In Rickettsia rickettsii (strain Sheila Smith), this protein is 3-deoxy-manno-octulosonate cytidylyltransferase.